Here is a 578-residue protein sequence, read N- to C-terminus: Forkhead box protein P1 (578 aa).

The C2H2-type zinc-finger motif lies at 208–233 (GVCKWPGCETICEDFPSFLKHLNSEH). Residues 250–271 (VQQLELQLSKDKERLQAMMSHL) form a leucine-zipper region. Positions 284 to 288 (PLNLV) are ctbp1-binding. Over residues 293 to 305 (LSKTASEASPQSL) the composition is skewed to polar residues. Residues 293-325 (LSKTASEASPQSLPHTPTTPTAPLTPITQGPSV) form a disordered region. Over residues 306 to 320 (PHTPTTPTAPLTPIT) the composition is skewed to low complexity. Residues 366 to 456 (RPPFTYASLI…PQKISGSPTL (91 aa)) constitute a DNA-binding region (fork-head). Residues 511-578 (MEHTSSNGSD…EDDPVNDDME (68 aa)) are disordered. A compositionally biased stretch (low complexity) spans 515 to 527 (SSNGSDSSPGRSP). The segment covering 568 to 578 (YEDDPVNDDME) has biased composition (acidic residues).

In terms of assembly, dimerization is required for DNA-binding. Isoform a, but not isoform b, interacts with ctbp1. As to expression, all isoforms show similar spatial expression. Localized to the animal hemisphere of early cleavage stage embryos. At tailbud stages, expressed in regions of the brain, eye and the splanchnic mesodermal layer of the lateral plate mesoderm surrounding the gut. At stage 35, expressed within the lens of the eye, in distinct regions of the head mesenchyme and in the area anterior to the gut. In the brain the anterior-most expression is restricted to the outer region of the mesencephalon. With ongoing development, additional expression is found in the curling gut.

Its subcellular location is the nucleus. Transcriptional repressor. In Xenopus laevis (African clawed frog), this protein is Forkhead box protein P1.